Consider the following 258-residue polypeptide: UPF0246 protein Sden_2729 (258 aa).

The protein belongs to the UPF0246 family.

The sequence is that of UPF0246 protein Sden_2729 from Shewanella denitrificans (strain OS217 / ATCC BAA-1090 / DSM 15013).